Reading from the N-terminus, the 680-residue chain is MLRVNLLILLCFVPFSLNNPLPTLPPDTANAYLRSFLPWWPNNTDFSLRAAPTPSESENSTEAVLLGAEYENGTDSTTGNQEDLDPATLRVQALPDSPLDALSPENAPKSFVSESMNHHDGNFIINFDEMGECPRDCSNDLREALGIVLQDMSHVERYHRICEKYSNASTCVNEDGRCDKDDRGMFEMMTSGLHYMCVEQELAFNATIKCIDDEAGLVQSECDAQCQTKNLFMNWMMRTAFQDTIQQGVNGIVGAATGTNANPLAFLQGAEGAAGGTPTGWADMLATVEQRPPSPQDAQQGFENFRQFTNDLCRIGDCMLDCIRSKFNTRCEGSAGTLLSEVFVRPIAASQNKLSILRPVLGSFMPEQCNYLTNNADLKKHRIDSTMDEELKRMYAEKMAKEIRDRNAQDELLSNLVPLDENGVPLPRALPELKSVDSPLDVSVKTLDQLILDMYSKNETKKAETTKKSYPNTTTVAPKNDDQAANTTAETTKTTSANITHVETTTLGNPKTEEVLSDVSLDTSGNNSTVADSGEGSAEGAGEGTEEDAEYSGSGNESTTEEEYSGSEEVSATDEGHPLAADESNEGLLTGSGEPAEEASGTGNSSVEGSGSGLDSLRSYIETSGEASGGAPGEASGEASGEASGEVSGEEEFSGYSGESPGENESSGEVPLTTTLHELY.

Positions 1-18 (MLRVNLLILLCFVPFSLN) are cleaved as a signal peptide. 13 N-linked (GlcNAc...) asparagine glycosylation sites follow: Asn-42, Asn-59, Asn-72, Asn-167, Asn-205, Asn-458, Asn-472, Asn-486, Asn-498, Asn-526, Asn-527, Asn-556, and Asn-604. The tract at residues 460–680 (TKKAETTKKS…PLTTTLHELY (221 aa)) is disordered. Residues 484–500 (AANTTAETTKTTSANIT) show a composition bias toward low complexity. Residues 520 to 530 (SLDTSGNNSTV) are compositionally biased toward polar residues. Composition is skewed to low complexity over residues 633–647 (GEAS…SGEV) and 654–669 (SGYS…SSGE). Residues Ser-640 and Ser-644 are each glycosylated (O-linked (Xyl...) (chondroitin sulfate) serine). N-linked (GlcNAc...) asparagine glycosylation is present at Asn-664.

The protein is Chondroitin proteoglycan 4 (cpg-4) of Caenorhabditis briggsae.